The following is a 268-amino-acid chain: MAGLLDGKRILVTGIITDSSIAFHIAKVAQEAGAQLVLTGFDRLRLIQRIVDRLPEKAPLIELDVQNEEHLNTLAQRVTGEIGEGNKLDGVVHSIASSETGMADQPFFDAPYEDVSKGIHISADSDASLAKALLPIMNPGGSIVGMDFDPSRAMPAYNWMTVAKSALESVNRFVAREAGPHGVRSNLVAAGPIRTLAMAGIVGGVLGDQAAEQIRLLEEGWDQRAPIGWNMKDPTPVAKTVCALLSDWLPATTGTIIYADRGASTQLL.

NAD(+)-binding positions include S20–I21, D64–V65, and I95–A96. Residue Y157 coordinates substrate. NAD(+)-binding residues include K164 and I193.

The protein belongs to the short-chain dehydrogenases/reductases (SDR) family. FabI subfamily. In terms of assembly, homodimer. Homotetramer.

The catalysed reaction is a 2,3-saturated acyl-[ACP] + NAD(+) = a (2E)-enoyl-[ACP] + NADH + H(+). The enzyme catalyses a 2,3-saturated acyl-CoA + NAD(+) = a (2E)-enoyl-CoA + NADH + H(+). It participates in lipid metabolism; mycolic acid biosynthesis. Functionally, enoyl-ACP reductase of the type II fatty acid syntase (FAS-II) system, which is involved in the biosynthesis of mycolic acids, a major component of mycobacterial cell walls. Catalyzes the NADH-dependent reduction of the double bond of 2-trans-enoyl-[acyl-carrier protein], an essential step in the fatty acid elongation cycle of the FAS-II pathway. Shows preference for long-chain fatty acyl thioester substrates, and can also use 2-trans-enoyl-CoAs as alternative substrates. The mycobacterial FAS-II system utilizes the products of the FAS-I system as primers to extend fatty acyl chain lengths up to C56, forming the meromycolate chain that serves as the precursor for final mycolic acids. In Mycobacterium avium, this protein is Enoyl-[acyl-carrier-protein] reductase [NADH].